The following is a 418-amino-acid chain: Inner capsid protein sigma-2 (418 aa).

This sequence belongs to the orthoreovirus sigma-1 protein family. In terms of assembly, interacts with protein mu-NS; in viral inclusions.

It is found in the virion. Functionally, inner capsid (core) component. This chain is Inner capsid protein sigma-2 (S2), found in Reovirus type 3 (strain Dearing) (T3D).